Here is a 511-residue protein sequence, read N- to C-terminus: Adenosine deaminase 2 (511 aa).

The N-terminal stretch at 1–29 (MLVDGPSEWPALRFLLLAVAMSFFGSALS) is a signal peptide. Residues 30-100 (IDETRAHLLL…HLIERSQVFN (71 aa)) form a dimerization region. Positions 112 and 114 each coordinate Zn(2+). Asp115 contributes to the substrate binding site. N-linked (GlcNAc...) asparagine glycosylation occurs at Asn127. The tract at residues 127–185 (NVTYRPHCHICFTPKGIMQFRFAHPTPRTSEKCSKWILLEDYRKRVQNVTEFDDSLLRN) is PRB domain. Cys137 and Cys159 are oxidised to a cystine. Asn174 and Asn185 each carry an N-linked (GlcNAc...) asparagine glycan. Substrate-binding positions include 204-211 (WSKFETIF), His293, and Gly326. His356 is a Zn(2+) binding site. The Proton donor role is filled by Glu359. An N-linked (GlcNAc...) asparagine glycan is attached at Asn378. His384 serves as the catalytic Proton acceptor. Asp441 provides a ligand contact to Zn(2+). Asp442 is a binding site for substrate.

The protein belongs to the metallo-dependent hydrolases superfamily. Adenosine and AMP deaminases family. ADGF subfamily. As to quaternary structure, homodimer. Interacts with adenosine receptors. Binds heparin. The cofactor is Zn(2+).

It is found in the secreted. It carries out the reaction adenosine + H2O + H(+) = inosine + NH4(+). Functionally, adenosine deaminase that may contribute to the degradation of extracellular adenosine, a signaling molecule that controls a variety of cellular responses. Requires elevated adenosine levels for optimal enzyme activity. Binds to cell surfaces via proteoglycans and may play a role in the regulation of cell proliferation and differentiation, independently of its enzyme activity. This chain is Adenosine deaminase 2, found in Pongo abelii (Sumatran orangutan).